The chain runs to 404 residues: S-adenosylmethionine synthase (404 aa).

His-17 lines the ATP pocket. Asp-19 lines the Mg(2+) pocket. Position 45 (Glu-45) interacts with K(+). L-methionine-binding residues include Glu-58 and Gln-101. The segment at 101–111 (QSADINRGVDR) is flexible loop. ATP contacts are provided by residues 172–174 (DAK), 245–246 (RF), Asp-254, 260–261 (RK), Ala-277, and Lys-281. Position 254 (Asp-254) interacts with L-methionine. Lys-285 is an L-methionine binding site.

The protein belongs to the AdoMet synthase family. As to quaternary structure, homotetramer; dimer of dimers. Mg(2+) serves as cofactor. K(+) is required as a cofactor.

Its subcellular location is the cytoplasm. The catalysed reaction is L-methionine + ATP + H2O = S-adenosyl-L-methionine + phosphate + diphosphate. It functions in the pathway amino-acid biosynthesis; S-adenosyl-L-methionine biosynthesis; S-adenosyl-L-methionine from L-methionine: step 1/1. In terms of biological role, catalyzes the formation of S-adenosylmethionine (AdoMet) from methionine and ATP. The overall synthetic reaction is composed of two sequential steps, AdoMet formation and the subsequent tripolyphosphate hydrolysis which occurs prior to release of AdoMet from the enzyme. This is S-adenosylmethionine synthase from Chlorobium luteolum (strain DSM 273 / BCRC 81028 / 2530) (Pelodictyon luteolum).